We begin with the raw amino-acid sequence, 660 residues long: Secretin PulD (660 aa).

A signal peptide spans methionine 1–alanine 27. An N0 region spans residues glutamate 28 to glycine 124. An N1 region spans residues glutamate 126–glycine 190. The tract at residues aspartate 191–alanine 264 is N2. The N3 stretch occupies residues glycine 267–aspartate 341. A secretin region spans residues glutamine 346–aspartate 596. The tract at residues aspartate 598–leucine 660 is s domain.

It belongs to the bacterial secretin family. GSP D subfamily. In terms of assembly, forms a cylindrical channel with 15 subunits.

Its subcellular location is the cell outer membrane. In terms of biological role, involved in a type II secretion system (T2SS, formerly general secretion pathway, GSP) for the export of proteins. Required for the translocation of pullulanase. This subunit forms the outer membrane channel. The protein is Secretin PulD (pulD) of Klebsiella pneumoniae.